A 125-amino-acid chain; its full sequence is NADPH-dependent 7-cyano-7-deazaguanine reductase (125 aa).

The active-site Thioimide intermediate is C41. D48 serves as the catalytic Proton donor. Substrate-binding positions include 63–65 (VEL) and 82–83 (HE).

The protein belongs to the GTP cyclohydrolase I family. QueF type 1 subfamily.

It is found in the cytoplasm. The catalysed reaction is 7-aminomethyl-7-carbaguanine + 2 NADP(+) = 7-cyano-7-deazaguanine + 2 NADPH + 3 H(+). The protein operates within tRNA modification; tRNA-queuosine biosynthesis. Its function is as follows. Catalyzes the NADPH-dependent reduction of 7-cyano-7-deazaguanine (preQ0) to 7-aminomethyl-7-deazaguanine (preQ1). The polypeptide is NADPH-dependent 7-cyano-7-deazaguanine reductase (Sulfurimonas denitrificans (strain ATCC 33889 / DSM 1251) (Thiomicrospira denitrificans (strain ATCC 33889 / DSM 1251))).